The chain runs to 185 residues: UPF0669 protein C6orf120 homolog (185 aa).

A signal peptide spans 1–23 (MAARWRRILIVFVAAQVLCLVNT). Residue Asn47 is glycosylated (N-linked (GlcNAc...) asparagine).

It belongs to the UPF0669 family.

It is found in the secreted. This chain is UPF0669 protein C6orf120 homolog, found in Gallus gallus (Chicken).